The primary structure comprises 783 residues: E3 UFM1-protein ligase 1 homolog (783 aa).

A disordered region spans residues 406–476 (TLGTTHDADE…DAVQQSANSS (71 aa)). The span at 446 to 457 (KSTKKHQRGRAA) shows a compositional bias: basic residues.

Belongs to the UFL1 family.

In terms of biological role, E3 UFM1-protein ligase that mediates ufmylation of target proteins. The chain is E3 UFM1-protein ligase 1 homolog from Drosophila grimshawi (Hawaiian fruit fly).